The sequence spans 431 residues: Adenylosuccinate synthetase (431 aa).

GTP is bound by residues 12 to 18 (GDEGKGK) and 40 to 42 (GHT). Aspartate 13 acts as the Proton acceptor in catalysis. Residues aspartate 13 and glycine 40 each coordinate Mg(2+). IMP contacts are provided by residues 13 to 16 (DEGK), 38 to 41 (NAGH), threonine 130, arginine 144, glutamine 225, threonine 240, and arginine 304. The active-site Proton donor is histidine 41. Residue 300-306 (ATTGRPR) coordinates substrate. GTP contacts are provided by residues arginine 306, 332-334 (KLD), and 414-416 (SVG).

The protein belongs to the adenylosuccinate synthetase family. Homodimer. It depends on Mg(2+) as a cofactor.

The protein localises to the cytoplasm. The enzyme catalyses IMP + L-aspartate + GTP = N(6)-(1,2-dicarboxyethyl)-AMP + GDP + phosphate + 2 H(+). It functions in the pathway purine metabolism; AMP biosynthesis via de novo pathway; AMP from IMP: step 1/2. Plays an important role in the de novo pathway of purine nucleotide biosynthesis. Catalyzes the first committed step in the biosynthesis of AMP from IMP. The polypeptide is Adenylosuccinate synthetase (Geotalea uraniireducens (strain Rf4) (Geobacter uraniireducens)).